We begin with the raw amino-acid sequence, 65 residues long: Large ribosomal subunit protein bL33 (65 aa).

The segment at 19–40 is disordered; the sequence is TVPSSKKRSAGVSRYTTEKNRR.

This sequence belongs to the bacterial ribosomal protein bL33 family.

In Prochlorococcus marinus (strain NATL2A), this protein is Large ribosomal subunit protein bL33.